The sequence spans 1107 residues: Protein translocase subunit SecA (1107 aa).

ATP contacts are provided by residues Q169, 187–191 (GEGKT), and D688. Basic and acidic residues predominate over residues 1036–1066 (RHAAEQRTDMSKYRTQKDDIEAQQKAQRDAA). The segment at 1036–1107 (RHAAEQRTDM…KFKQCHGRNL (72 aa)) is disordered. Positions 1091, 1093, 1102, and 1103 each coordinate Zn(2+). The segment covering 1097–1107 (KKFKQCHGRNL) has biased composition (basic residues).

The protein belongs to the SecA family. In terms of assembly, monomer and homodimer. Part of the essential Sec protein translocation apparatus which comprises SecA, SecYEG and auxiliary proteins SecDF. Other proteins may also be involved. Zn(2+) is required as a cofactor.

It is found in the cell inner membrane. It localises to the cytoplasm. It catalyses the reaction ATP + H2O + cellular proteinSide 1 = ADP + phosphate + cellular proteinSide 2.. Its function is as follows. Part of the Sec protein translocase complex. Interacts with the SecYEG preprotein conducting channel. Has a central role in coupling the hydrolysis of ATP to the transfer of proteins into and across the cell membrane, serving as an ATP-driven molecular motor driving the stepwise translocation of polypeptide chains across the membrane. The chain is Protein translocase subunit SecA from Porphyromonas gingivalis (strain ATCC BAA-308 / W83).